A 57-amino-acid polypeptide reads, in one-letter code: DNA-directed RNA polymerase subunit Rpo6 (57 aa).

This sequence belongs to the archaeal Rpo6/eukaryotic RPB6 RNA polymerase subunit family. As to quaternary structure, part of the RNA polymerase complex.

The protein resides in the cytoplasm. It carries out the reaction RNA(n) + a ribonucleoside 5'-triphosphate = RNA(n+1) + diphosphate. Its function is as follows. DNA-dependent RNA polymerase (RNAP) catalyzes the transcription of DNA into RNA using the four ribonucleoside triphosphates as substrates. In Methanocaldococcus jannaschii (strain ATCC 43067 / DSM 2661 / JAL-1 / JCM 10045 / NBRC 100440) (Methanococcus jannaschii), this protein is DNA-directed RNA polymerase subunit Rpo6.